The primary structure comprises 255 residues: Putative SET domain-containing protein L678 (255 aa).

An SET domain is found at 5-176 (NRISEVFIKK…TGEELTDNYV (172 aa)). The segment at 235 to 255 (LQQNSKNLKKNPKKTIKATPK) is disordered.

The protein belongs to the class V-like SAM-binding methyltransferase superfamily.

The sequence is that of Putative SET domain-containing protein L678 from Acanthamoeba polyphaga mimivirus (APMV).